The primary structure comprises 102 residues: Small ribosomal subunit protein uS10 (102 aa).

Belongs to the universal ribosomal protein uS10 family. Part of the 30S ribosomal subunit.

Its function is as follows. Involved in the binding of tRNA to the ribosomes. This chain is Small ribosomal subunit protein uS10, found in Cenarchaeum symbiosum (strain A).